A 459-amino-acid chain; its full sequence is Argininosuccinate lyase (459 aa).

It belongs to the lyase 1 family. Argininosuccinate lyase subfamily.

Its subcellular location is the cytoplasm. The catalysed reaction is 2-(N(omega)-L-arginino)succinate = fumarate + L-arginine. It participates in amino-acid biosynthesis; L-arginine biosynthesis; L-arginine from L-ornithine and carbamoyl phosphate: step 3/3. The protein is Argininosuccinate lyase of Geobacillus thermodenitrificans (strain NG80-2).